Here is a 208-residue protein sequence, read N- to C-terminus: uncharacterized protein (208 aa).

Positions 1–18 (MSPTKDSHPSPHFPRDSG) are enriched in basic and acidic residues. Disordered regions lie at residues 1-122 (MSPT…LPPP) and 135-208 (RECH…TPDG).

This is an uncharacterized protein from Homo sapiens (Human).